A 515-amino-acid chain; its full sequence is Probable 2-isopropylmalate synthase (515 aa).

Residues valine 20 to valine 271 form the Pyruvate carboxyltransferase domain. Positions 29, 209, 211, and 245 each coordinate a divalent metal cation.

Belongs to the alpha-IPM synthase/homocitrate synthase family. As to quaternary structure, homodimer. The cofactor is a divalent metal cation.

The enzyme catalyses 3-methyl-2-oxobutanoate + acetyl-CoA + H2O = (2S)-2-isopropylmalate + CoA + H(+). It functions in the pathway amino-acid biosynthesis; L-leucine biosynthesis; L-leucine from 3-methyl-2-oxobutanoate: step 1/4. Catalyzes the condensation of the acetyl group of acetyl-CoA with 3-methyl-2-oxobutanoate (2-oxoisovalerate) to form 3-carboxy-3-hydroxy-4-methylpentanoate (2-isopropylmalate). The protein is Probable 2-isopropylmalate synthase (leuA) of Methanosarcina acetivorans (strain ATCC 35395 / DSM 2834 / JCM 12185 / C2A).